Here is a 196-residue protein sequence, read N- to C-terminus: Mediator of RNA polymerase II transcription subunit 21 (196 aa).

Residues 52 to 111 form a disordered region; it reads KIPKNASTPPVPASAPQAAQSQSQASPPPPDTANPQTGGQHADQQQQSPDGEGLPAPDSP. Low complexity-rich tracts occupy residues 65-76 and 87-98; these read SAPQAAQSQSQA and QTGGQHADQQQQ. A coiled-coil region spans residues 144 to 174; it reads SSEAEQERRIRELEGELRIVEGVREERRREL.

The protein belongs to the Mediator complex subunit 21 family. In terms of assembly, component of the Mediator complex.

The protein localises to the nucleus. In terms of biological role, component of the Mediator complex, a coactivator involved in the regulated transcription of nearly all RNA polymerase II-dependent genes. Mediator functions as a bridge to convey information from gene-specific regulatory proteins to the basal RNA polymerase II transcription machinery. Mediator is recruited to promoters by direct interactions with regulatory proteins and serves as a scaffold for the assembly of a functional preinitiation complex with RNA polymerase II and the general transcription factors. The polypeptide is Mediator of RNA polymerase II transcription subunit 21 (srb7) (Aspergillus niger (strain ATCC MYA-4892 / CBS 513.88 / FGSC A1513)).